Here is a 469-residue protein sequence, read N- to C-terminus: Cysteine--tRNA ligase (469 aa).

C33 is a Zn(2+) binding site. The 'HIGH' region motif lies at 35 to 45 (ATVQGLPHIGH). 3 residues coordinate Zn(2+): C211, H236, and E240. The 'KMSKS' region motif lies at 267–271 (KMSKS). Residue K270 coordinates ATP.

This sequence belongs to the class-I aminoacyl-tRNA synthetase family. Monomer. The cofactor is Zn(2+).

It localises to the cytoplasm. It catalyses the reaction tRNA(Cys) + L-cysteine + ATP = L-cysteinyl-tRNA(Cys) + AMP + diphosphate. This Mycobacterium bovis (strain ATCC BAA-935 / AF2122/97) protein is Cysteine--tRNA ligase (cysS).